The sequence spans 166 residues: MNYTSYILAFQLCVILGSSGCYCQAPFFDEIENLKKYFNASNPDVADGGPLFLEILKNWKEESDKKIIQSQIVSFYFKLFENLKDNQIIQRSMDIIKQDMFQKFLNGSSEKLEDFKKLIQIPVDNLKVQRKAISELIKVMNDLSPKSNLRKRKRSQNLFRGRRASK.

The N-terminal stretch at 1–23 is a signal peptide; the sequence is MNYTSYILAFQLCVILGSSGCYC. At glutamine 24 the chain carries Pyrrolidone carboxylic acid. N-linked (GlcNAc...) asparagine glycans are attached at residues asparagine 39 and asparagine 106.

This sequence belongs to the type II (or gamma) interferon family. Homodimer. Interacts with IFNGR1 (via extracellular domain); this interaction promotes IFNGR1 dimerization. As to expression, released primarily from activated T lymphocytes.

The protein localises to the secreted. Its function is as follows. Type II interferon produced by immune cells such as T-cells and NK cells that plays crucial roles in antimicrobial, antiviral, and antitumor responses by activating effector immune cells and enhancing antigen presentation. Primarily signals through the JAK-STAT pathway after interaction with its receptor IFNGR1 to affect gene regulation. Upon IFNG binding, IFNGR1 intracellular domain opens out to allow association of downstream signaling components JAK2, JAK1 and STAT1, leading to STAT1 activation, nuclear translocation and transcription of IFNG-regulated genes. Many of the induced genes are transcription factors such as IRF1 that are able to further drive regulation of a next wave of transcription. Plays a role in class I antigen presentation pathway by inducing a replacement of catalytic proteasome subunits with immunoproteasome subunits. In turn, increases the quantity, quality, and repertoire of peptides for class I MHC loading. Increases the efficiency of peptide generation also by inducing the expression of activator PA28 that associates with the proteasome and alters its proteolytic cleavage preference. Up-regulates as well MHC II complexes on the cell surface by promoting expression of several key molecules such as cathepsins B/CTSB, H/CTSH, and L/CTSL. Participates in the regulation of hematopoietic stem cells during development and under homeostatic conditions by affecting their development, quiescence, and differentiation. The sequence is that of Interferon gamma (IFNG) from Camelus bactrianus (Bactrian camel).